The primary structure comprises 289 residues: MKLLVKAPAKINLSLDVLGKRQDGYHEVKMIMTTIDLADRLELMELAEDRIEILSHNRYVPDDQRNLAYQAAKLLKEKFNVKKGVSITIEKTIPVAAGLAGGSSDAAATLRGLNKLWNLGLTIDQLAELGAEIGSDVSFCVYGGTAIATGRGEQIEHIKTPPSCWVILAKPHIGVFTADVYGNLKLNRVTHPNVDKMVDVINAGDYKGICDTVGNVLEDVTFAMHPEVARIKAQMKRFGADAVLMSGSGPTVFGLVHHDSRMHRIYNGLKGFCEQVYAVRLLGERETLE.

The active site involves Lys10. 94–104 (PVAAGLAGGSS) contacts ATP. Asp136 is an active-site residue.

Belongs to the GHMP kinase family. IspE subfamily.

The catalysed reaction is 4-CDP-2-C-methyl-D-erythritol + ATP = 4-CDP-2-C-methyl-D-erythritol 2-phosphate + ADP + H(+). It participates in isoprenoid biosynthesis; isopentenyl diphosphate biosynthesis via DXP pathway; isopentenyl diphosphate from 1-deoxy-D-xylulose 5-phosphate: step 3/6. Its function is as follows. Catalyzes the phosphorylation of the position 2 hydroxy group of 4-diphosphocytidyl-2C-methyl-D-erythritol. In Bacillus anthracis, this protein is 4-diphosphocytidyl-2-C-methyl-D-erythritol kinase.